Here is a 210-residue protein sequence, read N- to C-terminus: Protein GrpE (210 aa).

The disordered stretch occupies residues 1 to 42 (MANEERTIPETNVASERPEDPVESQTRAEGGEQIQEAAPETA).

The protein belongs to the GrpE family. Homodimer.

The protein localises to the cytoplasm. Its function is as follows. Participates actively in the response to hyperosmotic and heat shock by preventing the aggregation of stress-denatured proteins, in association with DnaK and GrpE. It is the nucleotide exchange factor for DnaK and may function as a thermosensor. Unfolded proteins bind initially to DnaJ; upon interaction with the DnaJ-bound protein, DnaK hydrolyzes its bound ATP, resulting in the formation of a stable complex. GrpE releases ADP from DnaK; ATP binding to DnaK triggers the release of the substrate protein, thus completing the reaction cycle. Several rounds of ATP-dependent interactions between DnaJ, DnaK and GrpE are required for fully efficient folding. In Nitrosococcus oceani (strain ATCC 19707 / BCRC 17464 / JCM 30415 / NCIMB 11848 / C-107), this protein is Protein GrpE.